The chain runs to 353 residues: Spermidine/putrescine import ATP-binding protein PotA (353 aa).

In terms of domain architecture, ABC transporter spans 7–237 (IRFERVTKEY…PINRFVADFI (231 aa)). 39–46 (GPSGCGKT) is a binding site for ATP.

It belongs to the ABC transporter superfamily. Spermidine/putrescine importer (TC 3.A.1.11.1) family. As to quaternary structure, the complex is composed of two ATP-binding proteins (PotA), two transmembrane proteins (PotB and PotC) and a solute-binding protein (PotD).

The protein localises to the cell membrane. The catalysed reaction is ATP + H2O + polyamine-[polyamine-binding protein]Side 1 = ADP + phosphate + polyamineSide 2 + [polyamine-binding protein]Side 1.. Its function is as follows. Part of the ABC transporter complex PotABCD involved in spermidine/putrescine import. Responsible for energy coupling to the transport system. This is Spermidine/putrescine import ATP-binding protein PotA from Geobacillus kaustophilus (strain HTA426).